We begin with the raw amino-acid sequence, 301 residues long: G-protein coupled receptor homolog U51 (301 aa).

Residues Met1 to Glu15 lie on the Extracellular side of the membrane. A helical transmembrane segment spans residues Phe16–Val36. The Cytoplasmic segment spans residues Arg37 to Ala48. A helical membrane pass occupies residues Val49–Leu69. The Extracellular segment spans residues Ser70–Ile82. Residues Leu83–Ile103 traverse the membrane as a helical segment. Over Glu104–Ala122 the chain is Cytoplasmic. Residues Leu123–Leu143 traverse the membrane as a helical segment. Over Asn144–Asp168 the chain is Extracellular. The helical transmembrane segment at Met169–Tyr189 threads the bilayer. Residues Ser190–Glu199 lie on the Cytoplasmic side of the membrane. Residues Leu200 to Pro220 traverse the membrane as a helical segment. Over Lys221 to Asp238 the chain is Extracellular. Residues Ile239–Ala259 form a helical membrane-spanning segment. The Cytoplasmic segment spans residues Cys260 to Lys301.

The protein belongs to the G-protein coupled receptor 1 family.

Its subcellular location is the host cell membrane. The sequence is that of G-protein coupled receptor homolog U51 (U51) from Homo sapiens (Human).